Consider the following 1028-residue polypeptide: Isoleucine--tRNA ligase (1028 aa).

A 'HIGH' region motif is present at residues 51–61; that stretch reads PTANGRPHIGH. The short motif at 591-595 is the 'KMSKS' region element; it reads KMSKS. An ATP-binding site is contributed by Lys594.

It belongs to the class-I aminoacyl-tRNA synthetase family. IleS type 2 subfamily. As to quaternary structure, monomer. It depends on Zn(2+) as a cofactor.

The protein resides in the cytoplasm. It carries out the reaction tRNA(Ile) + L-isoleucine + ATP = L-isoleucyl-tRNA(Ile) + AMP + diphosphate. Its function is as follows. Catalyzes the attachment of isoleucine to tRNA(Ile). As IleRS can inadvertently accommodate and process structurally similar amino acids such as valine, to avoid such errors it has two additional distinct tRNA(Ile)-dependent editing activities. One activity is designated as 'pretransfer' editing and involves the hydrolysis of activated Val-AMP. The other activity is designated 'posttransfer' editing and involves deacylation of mischarged Val-tRNA(Ile). The polypeptide is Isoleucine--tRNA ligase (Thermoplasma volcanium (strain ATCC 51530 / DSM 4299 / JCM 9571 / NBRC 15438 / GSS1)).